The chain runs to 427 residues: MNIAVVGLSHKTAPVEIREKLSIQEAKLEEALTHLRSYPHIEEVTVISTCNRLEIYAVVTDTEKGVVEITQFLSETGNIPLATLRRYLFTLLHEDAVRHLMRVAAGLESLVLGEGQILAQVRTTHKLGQKYKGVGRLLDRLFKQAITAGRRVRTETDIGTGAVSISSAAVELVHRQVDLSSQKTVIIGAGKMACLLVKHLLAKGATDITIVNRSQRRSQDLANQFPQAQLTLCPLTDMFTAIAAGDIVFTSTGATEPILNCENLTGCVINRKSLMLVDISVPRNVAADVHAMEQVRAFNVDDLKEVVAQNQASRRQMARQAEALLEEEIAAFDLWWRSLETVPTISSLRSKVEDIREQELEKALSRLGSEFAEKHQEVIEALTRGIVNKILHEPMVQLRAQQDIEARKQCLRSLKMLFDLEVEEQFG.

Residues 49–52, serine 109, 114–116, and glutamine 120 contribute to the substrate site; these read TCNR and EGQ. Catalysis depends on cysteine 50, which acts as the Nucleophile. Residue 188-193 participates in NADP(+) binding; it reads GAGKMA.

It belongs to the glutamyl-tRNA reductase family. In terms of assembly, homodimer.

It catalyses the reaction (S)-4-amino-5-oxopentanoate + tRNA(Glu) + NADP(+) = L-glutamyl-tRNA(Glu) + NADPH + H(+). It participates in porphyrin-containing compound metabolism; protoporphyrin-IX biosynthesis; 5-aminolevulinate from L-glutamyl-tRNA(Glu): step 1/2. It functions in the pathway porphyrin-containing compound metabolism; chlorophyll biosynthesis. With respect to regulation, feedback inhibition by heme. Functionally, catalyzes the NADPH-dependent reduction of glutamyl-tRNA(Glu) to glutamate 1-semialdehyde (GSA). In Synechocystis sp. (strain ATCC 27184 / PCC 6803 / Kazusa), this protein is Glutamyl-tRNA reductase.